Here is a 242-residue protein sequence, read N- to C-terminus: 1-(5-phosphoribosyl)-5-[(5-phosphoribosylamino)methylideneamino] imidazole-4-carboxamide isomerase (242 aa).

Residue aspartate 10 is the Proton acceptor of the active site.

It belongs to the HisA/HisF family.

The protein localises to the cytoplasm. It carries out the reaction 1-(5-phospho-beta-D-ribosyl)-5-[(5-phospho-beta-D-ribosylamino)methylideneamino]imidazole-4-carboxamide = 5-[(5-phospho-1-deoxy-D-ribulos-1-ylimino)methylamino]-1-(5-phospho-beta-D-ribosyl)imidazole-4-carboxamide. The protein operates within amino-acid biosynthesis; L-histidine biosynthesis; L-histidine from 5-phospho-alpha-D-ribose 1-diphosphate: step 4/9. The sequence is that of 1-(5-phosphoribosyl)-5-[(5-phosphoribosylamino)methylideneamino] imidazole-4-carboxamide isomerase from Corynebacterium diphtheriae (strain ATCC 700971 / NCTC 13129 / Biotype gravis).